The primary structure comprises 106 residues: RxLR effector protein PSR1 (106 aa).

Residues 1–20 form the signal peptide; sequence MRLTYVLLVAVTTLLVSCDA. The RxLR-dEER motif lies at 33-46; that stretch reads RLLRFVEAADEEER. The segment at 50–106 is WY domain; the sequence is FSPEKLRKMLGDETYRLKKFGKWDSDGHTFDGLKHYLLLSDSSMVKLRNMYKAWLEQ. A Bipartite nuclear localization signal (NLS) motif is present at residues 56 to 69; the sequence is RKMLGDETYRLKKF.

It belongs to the RxLR effector family. As to quaternary structure, interacts with host PINP1.

Its subcellular location is the secreted. It localises to the host nucleus. Its function is as follows. Secreted effector that possesses RNA silencing suppression activity by inhibiting the biogenesis of small RNAs in the host plant to promote enhanced susceptibility of host to the pathogen during infection. Interferes with secondary siRNA production by associating with host nuclear protein PINP1 that acts as a regulator of the accumulation of both microRNAs and endogenous small interfering RNAs. This chain is RxLR effector protein PSR1, found in Phytophthora sojae (Soybean stem and root rot agent).